Here is a 248-residue protein sequence, read N- to C-terminus: Probable transcriptional regulatory protein Smed_2641 (248 aa).

It belongs to the TACO1 family.

It localises to the cytoplasm. The sequence is that of Probable transcriptional regulatory protein Smed_2641 from Sinorhizobium medicae (strain WSM419) (Ensifer medicae).